A 253-amino-acid chain; its full sequence is N-acetylmuramoyl-L-alanine amidase CwlM (253 aa).

Positions isoleucine 4 to alanine 172 constitute a MurNAc-LAA domain. One can recognise an SPOR domain in the interval lysine 179 to glutamate 253. Tandem repeats lie at residues leucine 184–serine 219 and leucine 220–glutamate 253. The interval leucine 184–glutamate 253 is 2 X 35 AA approximate tandem repeats.

It belongs to the N-acetylmuramoyl-L-alanine amidase 3 family.

Its subcellular location is the secreted. The enzyme catalyses Hydrolyzes the link between N-acetylmuramoyl residues and L-amino acid residues in certain cell-wall glycopeptides.. Its function is as follows. Hydrolyzes the cell wall of M.luteus more efficiently than that of B.licheniformis and B.subtilis. The C-terminal region, including the repeats, determines substrate specificity. The sequence is that of N-acetylmuramoyl-L-alanine amidase CwlM (cwlM) from Bacillus licheniformis.